A 21-amino-acid polypeptide reads, in one-letter code: Endo-1,4-beta-xylanase A (21 aa).

It belongs to the glycosyl hydrolase 10 (cellulase F) family.

The enzyme catalyses Endohydrolysis of (1-&gt;4)-beta-D-xylosidic linkages in xylans.. Its pathway is glycan degradation; xylan degradation. The polypeptide is Endo-1,4-beta-xylanase A (Dictyoglomus sp. (strain B4A)).